The sequence spans 137 residues: Nucleoside diphosphate kinase (137 aa).

The ATP site is built by Lys-10, Phe-58, Arg-86, Thr-92, Arg-103, and Asn-113. His-116 (pros-phosphohistidine intermediate) is an active-site residue.

Belongs to the NDK family. As to quaternary structure, homotetramer. Mg(2+) serves as cofactor.

Its subcellular location is the cytoplasm. The catalysed reaction is a 2'-deoxyribonucleoside 5'-diphosphate + ATP = a 2'-deoxyribonucleoside 5'-triphosphate + ADP. The enzyme catalyses a ribonucleoside 5'-diphosphate + ATP = a ribonucleoside 5'-triphosphate + ADP. Major role in the synthesis of nucleoside triphosphates other than ATP. The ATP gamma phosphate is transferred to the NDP beta phosphate via a ping-pong mechanism, using a phosphorylated active-site intermediate. The chain is Nucleoside diphosphate kinase from Helicobacter acinonychis (strain Sheeba).